The primary structure comprises 1106 residues: Zinc finger protein GLI1 (1106 aa).

Positions 1-20 are SNAG domain; sequence MFNSMTPPPISSYGEPCCLR. The tract at residues 120–124 is interaction with SUFU; that stretch reads SYGHL. 5 consecutive C2H2-type zinc fingers follow at residues 235 to 260, 268 to 295, 301 to 325, 331 to 356, and 362 to 387; these read TDCR…NSEH, FVCH…MRRH, HKCT…LRSH, YMCE…NRTH, and YVCK…KTVH. The interval 283-291 is interaction with DNA; it reads KAQYMLVVH. Interaction with DNA stretches follow at residues 345-350 and 375-381; these read ASDRAK and DPSSLRK. Disordered stretches follow at residues 375-485, 516-580, 732-792, 817-889, and 914-942; these read DPSS…DEGP, GLKL…SLPG, YGGP…LYPG, EQGC…PTHS, and GRED…SRAK. Positions 413 to 428 are enriched in basic and acidic residues; it reads EPKREREGGPIREESR. Residues 442–463 are compositionally biased toward polar residues; sequence PGAQSSCSSDHSPAGSAANTDS. An N6-acetyllysine modification is found at K518. Low complexity-rich tracts occupy residues 544–560 and 737–753; these read SSSS…RRSS and GAAA…SLPL. Over residues 754–766 the composition is skewed to pro residues; it reads GPGPPTNYGPNPC. Positions 768-779 are enriched in polar residues; it reads QQASYPDPTQET. Residue K1003 forms a Glycyl lysine isopeptide (Lys-Gly) (interchain with G-Cter in SUMO2) linkage. The interval 1054-1087 is disordered; sequence DEPQGLSPPPSHDQRGSSGHTPPPSGPPNMAVGN.

This sequence belongs to the GLI C2H2-type zinc-finger protein family. In terms of assembly, interacts with KIF7. Interacts with STK36. Interacts with ZIC1; the interaction enhances transcription activation. Interacts with SUFU; this inhibits transcriptional activation by GLI1. In terms of processing, phosphorylated in vitro by ULK3. Post-translationally, acetylation at Lys-518 down-regulates transcriptional activity. Deacetylated by HDAC1. Ubiquitinated by the CRL2(FEM1B) complex, suppressing GLI1 transcriptional activator activity. In terms of tissue distribution, detected in testis (at protein level). Testis, myometrium and fallopian tube. Also expressed in the brain with highest expression in the cerebellum, optic nerve and olfactory tract. Isoform 1 is detected in brain, spleen, pancreas, liver, kidney and placenta; isoform 2 is not detectable in these tissues.

Its subcellular location is the cytoplasm. It localises to the nucleus. Its function is as follows. Acts as a transcriptional activator. Binds to the DNA consensus sequence 5'-GACCACCCA-3'. Regulates the transcription of specific genes during normal development. Plays a role in craniofacial development and digital development, as well as development of the central nervous system and gastrointestinal tract. Mediates SHH signaling. Plays a role in cell proliferation and differentiation via its role in SHH signaling. Functionally, acts as a transcriptional activator, but activates a different set of genes than isoform 1. Activates expression of CD24, unlike isoform 1. Mediates SHH signaling. Promotes cancer cell migration. The polypeptide is Zinc finger protein GLI1 (GLI1) (Homo sapiens (Human)).